Here is a 258-residue protein sequence, read N- to C-terminus: uncharacterized protein (258 aa).

7 helical membrane-spanning segments follow: residues 8–28 (VFLA…IVWF), 38–58 (VFFI…GGVH), 70–90 (EAMQ…GIFE), 121–141 (LEAI…AFAI), 176–196 (LGGI…LLVL), 204–224 (PLFL…AVLY), and 231–251 (HAAA…YWIV).

It is found in the cell membrane. This is an uncharacterized protein from Bacillus subtilis (strain 168).